Reading from the N-terminus, the 337-residue chain is Probable phospholipase A1 magnifin (337 aa).

An N-terminal signal peptide occupies residues 1-21 (MNLKYLLLFFCLVQVLHYCYS). Positions 22-33 (HGDPSLSNELDR) are excised as a propeptide. Cysteine 39 and cysteine 123 are oxidised to a cystine. Serine 173 functions as the Nucleophile in the catalytic mechanism. Catalysis depends on aspartate 201, which acts as the Charge relay system. 2 disulfides stabilise this stretch: cysteine 212–cysteine 217 and cysteine 255–cysteine 264. The Charge relay system role is filled by histidine 266. 3 cysteine pairs are disulfide-bonded: cysteine 281/cysteine 305, cysteine 282/cysteine 330, and cysteine 298/cysteine 303.

This sequence belongs to the AB hydrolase superfamily. Lipase family. As to expression, expressed by the venom gland.

It is found in the secreted. The enzyme catalyses a 1,2-diacyl-sn-glycero-3-phosphocholine + H2O = a 2-acyl-sn-glycero-3-phosphocholine + a fatty acid + H(+). Functionally, catalyzes the hydrolysis of phosphatidylcholine with phospholipase A1 activity. May act as an allergen and induce hemolytic activity. In vivo, induces dose-dependent platelet aggregation (nanomolar concentration) and induces thrombosis. This is Probable phospholipase A1 magnifin from Vespa magnifica (Hornet).